A 263-amino-acid chain; its full sequence is 3-methyl-2-oxobutanoate hydroxymethyltransferase (263 aa).

Positions 45 and 84 each coordinate Mg(2+). 3-methyl-2-oxobutanoate is bound by residues 45–46 (DS), D84, and K112. E114 serves as a coordination point for Mg(2+). E180 functions as the Proton acceptor in the catalytic mechanism.

It belongs to the PanB family. As to quaternary structure, homodecamer; pentamer of dimers. The cofactor is Mg(2+).

The protein resides in the cytoplasm. The enzyme catalyses 3-methyl-2-oxobutanoate + (6R)-5,10-methylene-5,6,7,8-tetrahydrofolate + H2O = 2-dehydropantoate + (6S)-5,6,7,8-tetrahydrofolate. The protein operates within cofactor biosynthesis; (R)-pantothenate biosynthesis; (R)-pantoate from 3-methyl-2-oxobutanoate: step 1/2. Its function is as follows. Catalyzes the reversible reaction in which hydroxymethyl group from 5,10-methylenetetrahydrofolate is transferred onto alpha-ketoisovalerate to form ketopantoate. The chain is 3-methyl-2-oxobutanoate hydroxymethyltransferase from Enterobacter sp. (strain 638).